The sequence spans 162 residues: NADH-ubiquinone oxidoreductase subunit 8 (162 aa).

4Fe-4S ferredoxin-type domains are found at residues 54 to 83 and 93 to 122; these read RRYQ…IESE and TRYD…EGPN. [4Fe-4S] cluster-binding residues include C63, C66, C69, C73, C102, C105, C108, and C112.

This sequence belongs to the complex I 23 kDa subunit family. Requires [4Fe-4S] cluster as cofactor.

The protein resides in the mitochondrion. The enzyme catalyses a ubiquinone + NADH + 5 H(+)(in) = a ubiquinol + NAD(+) + 4 H(+)(out). In terms of biological role, core subunit of the mitochondrial membrane respiratory chain NADH dehydrogenase (Complex I) that is believed to belong to the minimal assembly required for catalysis. Complex I functions in the transfer of electrons from NADH to the respiratory chain. The immediate electron acceptor for the enzyme is believed to be ubiquinone. May donate electrons to ubiquinone. This is NADH-ubiquinone oxidoreductase subunit 8 (NAD8) from Reclinomonas americana.